Consider the following 86-residue polypeptide: MASFRTLFACVVILCCVLWSSMARYGEDMEVETEMNKRDEGVRCTGQHASSFCLNGGTCRHIASLGEYYCICPGDYTGHRCDQKSG.

Residues 1–23 (MASFRTLFACVVILCCVLWSSMA) form the signal peptide. The propeptide occupies 24–36 (RYGEDMEVETEMN). Residues 40–82 (EGVRCTGQHASSFCLNGGTCRHIASLGEYYCICPGDYTGHRCD) form the EGF-like domain. Disulfide bonds link C44-C59, C53-C70, and C72-C81.

This sequence belongs to the EGF domain peptide family.

The protein resides in the secreted. It localises to the nematocyst. In terms of biological role, has both toxic and EGF activity. Its EGF activity consists of rounding cells (morphological change) and inducing tyrosine phosphorylation of the EGFR in A431 cells, but with a lower potency that human EGF. The protein is OMEGA-stichotoxin-Shd4a of Stichodactyla haddoni (Saddle carpet anemone).